Here is a 173-residue protein sequence, read N- to C-terminus: C-type lectin mosGCTL-7 (173 aa).

A signal peptide spans 1–24; sequence MVVGWSLLGWALSWLAVATVVVSA. One can recognise a C-type lectin domain in the interval 51–167; it reads NWFKATEYCH…CWDEYYFVCE (117 aa). 2 disulfides stabilise this stretch: C59–C166 and C139–C158. Residues N119 and N144 are each glycosylated (N-linked (GlcNAc...) asparagine).

As to quaternary structure, interacts with putative receptor-type tyrosine-protein phosphatase mosPTP-1; the interaction may mediate the recruitment of Japanese encephalitis virus particles in complex with C-type lectin mosGCTL-7 to the cell surface.

The protein localises to the secreted. Functionally, carbohydrate-binding protein. In terms of biological role, (Microbial infection) Facilitates Japanese encephalitis virus infection in mosquitoes. The protein is C-type lectin mosGCTL-7 of Culex quinquefasciatus (Southern house mosquito).